The primary structure comprises 287 residues: ATP synthase gamma chain (287 aa).

Belongs to the ATPase gamma chain family. F-type ATPases have 2 components, CF(1) - the catalytic core - and CF(0) - the membrane proton channel. CF(1) has five subunits: alpha(3), beta(3), gamma(1), delta(1), epsilon(1). CF(0) has three main subunits: a, b and c.

Its subcellular location is the cell inner membrane. Its function is as follows. Produces ATP from ADP in the presence of a proton gradient across the membrane. The gamma chain is believed to be important in regulating ATPase activity and the flow of protons through the CF(0) complex. The protein is ATP synthase gamma chain of Xanthomonas oryzae pv. oryzae (strain MAFF 311018).